Here is a 255-residue protein sequence, read N- to C-terminus: NAD kinase (255 aa).

Asp44 acts as the Proton acceptor in catalysis. Residues 44 to 45 (DG), His49, 114 to 115 (NE), Asp144, Ala152, 155 to 160 (SAYNLS), and Gln216 each bind NAD(+).

It belongs to the NAD kinase family. A divalent metal cation serves as cofactor.

It localises to the cytoplasm. The catalysed reaction is NAD(+) + ATP = ADP + NADP(+) + H(+). Its function is as follows. Involved in the regulation of the intracellular balance of NAD and NADP, and is a key enzyme in the biosynthesis of NADP. Catalyzes specifically the phosphorylation on 2'-hydroxyl of the adenosine moiety of NAD to yield NADP. In Rickettsia akari (strain Hartford), this protein is NAD kinase.